A 375-amino-acid chain; its full sequence is uncharacterized protein (375 aa).

A compositionally biased stretch (basic residues) spans 1-12 (MAGNKKQVKKNT). 2 disordered regions span residues 1–76 (MAGN…EKKS) and 119–274 (KNKN…KEIK). Residues 26–39 (DTSNLDTAVQTSAS) are compositionally biased toward polar residues. The segment covering 129 to 141 (TATDGTTTTTNIP) has biased composition (low complexity). Basic and acidic residues predominate over residues 175 to 185 (DETHSHKEEPK). 2 stretches are compositionally biased toward low complexity: residues 198 to 212 (SKQQ…SSSS) and 225 to 241 (PTPT…KSTP). Over residues 256–274 (EQPKEKSSPAPVKKEKEIK) the composition is skewed to basic and acidic residues. The next 2 helical transmembrane spans lie at 299-319 (VVYK…LVPL) and 327-347 (IYSY…TLFI). Positions 355 to 375 (ASKEQKSKSGNKKSTTRKVKA) are disordered. Over residues 363 to 375 (SGNKKSTTRKVKA) the composition is skewed to basic residues.

It is found in the membrane. This is an uncharacterized protein from Dictyostelium discoideum (Social amoeba).